The primary structure comprises 94 residues: Co-chaperonin GroES (94 aa).

Residues 17–53 (DSNPNSPIQLPDSAKKKPTKGKVVSVGPGASNSDGKV) are disordered.

The protein belongs to the GroES chaperonin family. As to quaternary structure, heptamer of 7 subunits arranged in a ring. Interacts with the chaperonin GroEL.

The protein resides in the cytoplasm. Its function is as follows. Together with the chaperonin GroEL, plays an essential role in assisting protein folding. The GroEL-GroES system forms a nano-cage that allows encapsulation of the non-native substrate proteins and provides a physical environment optimized to promote and accelerate protein folding. GroES binds to the apical surface of the GroEL ring, thereby capping the opening of the GroEL channel. This is Co-chaperonin GroES from Anaplasma phagocytophilum (strain HZ).